The chain runs to 476 residues: Regulator of nonsense transcripts 3A (476 aa).

The segment at 1 to 63 (MRSEKEGAGG…GGAGKPREEK (63 aa)) is disordered. Positions 21-38 (SGREKLSALEVQFHRDSQ) are enriched in basic and acidic residues. The interval 66 to 140 (ALSKVVIRRL…FDGYIFLDSK (75 aa)) is required for interaction with UPF2. Basic and acidic residues-rich tracts occupy residues 250 to 304 (REEE…RGEE), 340 to 401 (GSDK…KKGS), and 410 to 437 (AMER…KDRP). A disordered region spans residues 250-476 (REEEKRRRRE…TGPEKREEAE (227 aa)). Phosphoserine is present on Ser-341. The segment at 421–434 (DDSPAPRKERLANK) is required for association with EIF4A3 and ECJ core components CASC3, MAGOH and RBM8A.

It belongs to the RENT3 family. Found in a post-splicing messenger ribonucleoprotein (mRNP) complex. Associates with the exon junction complex (EJC). Interacts with UPF2 and RBM8A. Interacts with DHX34; the interaction is RNA-independent. Isoform 1 is strongly expressed in testis, uterus, muscle, fetal brain and spinal cord. Isoform 2 is strongly expressed in fetal brain and spinal cord.

It localises to the nucleus. Its subcellular location is the cytoplasm. Its function is as follows. Involved in nonsense-mediated decay (NMD) of mRNAs containing premature stop codons by associating with the nuclear exon junction complex (EJC) and serving as link between the EJC core and NMD machinery. Recruits UPF2 at the cytoplasmic side of the nuclear envelope and the subsequent formation of an UPF1-UPF2-UPF3 surveillance complex (including UPF1 bound to release factors at the stalled ribosome) is believed to activate NMD. However, UPF3A is shown to be only marginally active in NMD as compared to UPF3B. Binds spliced mRNA upstream of exon-exon junctions. In vitro, weakly stimulates translation. The protein is Regulator of nonsense transcripts 3A (UPF3A) of Homo sapiens (Human).